A 347-amino-acid polypeptide reads, in one-letter code: Isopentenyl-diphosphate delta-isomerase (347 aa).

9–10 lines the substrate pocket; the sequence is RK. FMN is bound by residues serine 67, 68–70, serine 98, and asparagine 127; that span reads SMT. Residue 98–100 participates in substrate binding; the sequence is SQR. Glutamine 162 contacts substrate. Glutamate 163 lines the Mg(2+) pocket. FMN is bound by residues lysine 194, threonine 224, 274-276, and 295-296; these read GIK and AA.

This sequence belongs to the IPP isomerase type 2 family. In terms of assembly, homooctamer. Dimer of tetramers. The cofactor is FMN. Requires NADPH as cofactor. Mg(2+) is required as a cofactor.

Its subcellular location is the cytoplasm. It carries out the reaction isopentenyl diphosphate = dimethylallyl diphosphate. In terms of biological role, involved in the biosynthesis of isoprenoids. Catalyzes the 1,3-allylic rearrangement of the homoallylic substrate isopentenyl (IPP) to its allylic isomer, dimethylallyl diphosphate (DMAPP). This Pseudescherichia vulneris (Escherichia vulneris) protein is Isopentenyl-diphosphate delta-isomerase.